Reading from the N-terminus, the 950-residue chain is UvrABC system protein A (950 aa).

G36–S43 serves as a coordination point for ATP. The C4-type zinc finger occupies C260–C287. 2 consecutive ABC transporter domains span residues F317 to L599 and A619 to K947. Position 651–658 (G651–S658) interacts with ATP. The C4-type zinc-finger motif lies at C750–C776.

It belongs to the ABC transporter superfamily. UvrA family. Forms a heterotetramer with UvrB during the search for lesions.

It localises to the cytoplasm. Its function is as follows. The UvrABC repair system catalyzes the recognition and processing of DNA lesions. UvrA is an ATPase and a DNA-binding protein. A damage recognition complex composed of 2 UvrA and 2 UvrB subunits scans DNA for abnormalities. When the presence of a lesion has been verified by UvrB, the UvrA molecules dissociate. The chain is UvrABC system protein A from Borreliella burgdorferi (strain ATCC 35210 / DSM 4680 / CIP 102532 / B31) (Borrelia burgdorferi).